The sequence spans 142 residues: ATP synthase epsilon chain (142 aa).

It belongs to the ATPase epsilon chain family. F-type ATPases have 2 components, CF(1) - the catalytic core - and CF(0) - the membrane proton channel. CF(1) has five subunits: alpha(3), beta(3), gamma(1), delta(1), epsilon(1). CF(0) has three main subunits: a, b and c.

It localises to the cell inner membrane. Produces ATP from ADP in the presence of a proton gradient across the membrane. This Shewanella woodyi (strain ATCC 51908 / MS32) protein is ATP synthase epsilon chain.